The chain runs to 112 residues: MEHALPDDCLSGLWRKHDDHVRLSVRLTPNGGRDAIDGVEQDADGNAHLKARVSAVPEGGKANKALIVLLAKKLGLPKSSITFISGETARKKILRIDTDPEDFEKLFKKLAG.

The protein belongs to the UPF0235 family.

The chain is UPF0235 protein Atu2660 from Agrobacterium fabrum (strain C58 / ATCC 33970) (Agrobacterium tumefaciens (strain C58)).